The chain runs to 264 residues: Thiazole synthase (264 aa).

K106 functions as the Schiff-base intermediate with DXP in the catalytic mechanism. Residues G167, A193 to G194, and N215 to S216 contribute to the 1-deoxy-D-xylulose 5-phosphate site.

It belongs to the ThiG family. As to quaternary structure, homotetramer. Forms heterodimers with either ThiH or ThiS.

It localises to the cytoplasm. It catalyses the reaction [ThiS sulfur-carrier protein]-C-terminal-Gly-aminoethanethioate + 2-iminoacetate + 1-deoxy-D-xylulose 5-phosphate = [ThiS sulfur-carrier protein]-C-terminal Gly-Gly + 2-[(2R,5Z)-2-carboxy-4-methylthiazol-5(2H)-ylidene]ethyl phosphate + 2 H2O + H(+). Its pathway is cofactor biosynthesis; thiamine diphosphate biosynthesis. In terms of biological role, catalyzes the rearrangement of 1-deoxy-D-xylulose 5-phosphate (DXP) to produce the thiazole phosphate moiety of thiamine. Sulfur is provided by the thiocarboxylate moiety of the carrier protein ThiS. In vitro, sulfur can be provided by H(2)S. The sequence is that of Thiazole synthase from Prochlorococcus marinus (strain AS9601).